Reading from the N-terminus, the 110-residue chain is Flagellar hook-basal body complex protein FliE (110 aa).

It belongs to the FliE family.

The protein resides in the bacterial flagellum basal body. The polypeptide is Flagellar hook-basal body complex protein FliE (Bordetella petrii (strain ATCC BAA-461 / DSM 12804 / CCUG 43448)).